We begin with the raw amino-acid sequence, 638 residues long: Acetolactate synthase 2, chloroplastic (638 aa).

Residues 1–39 (MATAATAAAALTGATTATPKSRRRAHHLATRRALAAPIR) constitute a chloroplast transit peptide. The interval 44 to 67 (SRATPTAPPATPLRPWGPNEPRKG) is disordered. Residue Glu112 participates in thiamine diphosphate binding. Residues Cys132 and Cys278 are joined by a disulfide bond. FAD is bound by residues Arg214, 320 to 341 (HGTV…FGVR), and 363 to 382 (DIDP…ICAD). The thiamine pyrophosphate binding stretch occupies residues 455-535 (QHQMWAAQYY…VKVFVLNNQH (81 aa)). The Mg(2+) site is built by Asp506 and Asn533.

Belongs to the TPP enzyme family. Mg(2+) is required as a cofactor. Requires thiamine diphosphate as cofactor.

It is found in the plastid. The protein localises to the chloroplast. The enzyme catalyses 2 pyruvate + H(+) = (2S)-2-acetolactate + CO2. It functions in the pathway amino-acid biosynthesis; L-isoleucine biosynthesis; L-isoleucine from 2-oxobutanoate: step 1/4. The protein operates within amino-acid biosynthesis; L-valine biosynthesis; L-valine from pyruvate: step 1/4. This Zea mays (Maize) protein is Acetolactate synthase 2, chloroplastic (ALS2).